Reading from the N-terminus, the 197-residue chain is MAEIILNVEVRDGAGTGNARATRRAGKVPGVLYGGGKAPVNIAVKANEFRKSLYTGKLLGHLVTLQYGEEKQSVIAKAVQFHPVTDEPVHFDLYRVDEHQLIKIEVPVHFKNHETSVGLKKGGTLEVIRHTVELACPADKIPEELVIDLAGHDIGDVIRISEVKLPEGVKPAMDRDFVIANVKASSAAQSDAGDTTA.

It belongs to the bacterial ribosomal protein bL25 family. CTC subfamily. Part of the 50S ribosomal subunit; part of the 5S rRNA/L5/L18/L25 subcomplex. Contacts the 5S rRNA. Binds to the 5S rRNA independently of L5 and L18.

Functionally, this is one of the proteins that binds to the 5S RNA in the ribosome where it forms part of the central protuberance. This chain is Large ribosomal subunit protein bL25, found in Caulobacter vibrioides (strain ATCC 19089 / CIP 103742 / CB 15) (Caulobacter crescentus).